Here is a 153-residue protein sequence, read N- to C-terminus: 6,7-dimethyl-8-ribityllumazine synthase (153 aa).

Residues Phe22, 56–58 (AFE), and 80–82 (AVI) each bind 5-amino-6-(D-ribitylamino)uracil. 85-86 (ST) contributes to the (2S)-2-hydroxy-3-oxobutyl phosphate binding site. Catalysis depends on His88, which acts as the Proton donor. Phe113 is a binding site for 5-amino-6-(D-ribitylamino)uracil. Arg127 lines the (2S)-2-hydroxy-3-oxobutyl phosphate pocket.

Belongs to the DMRL synthase family.

It carries out the reaction (2S)-2-hydroxy-3-oxobutyl phosphate + 5-amino-6-(D-ribitylamino)uracil = 6,7-dimethyl-8-(1-D-ribityl)lumazine + phosphate + 2 H2O + H(+). Its pathway is cofactor biosynthesis; riboflavin biosynthesis; riboflavin from 2-hydroxy-3-oxobutyl phosphate and 5-amino-6-(D-ribitylamino)uracil: step 1/2. Catalyzes the formation of 6,7-dimethyl-8-ribityllumazine by condensation of 5-amino-6-(D-ribitylamino)uracil with 3,4-dihydroxy-2-butanone 4-phosphate. This is the penultimate step in the biosynthesis of riboflavin. This is 6,7-dimethyl-8-ribityllumazine synthase from Fusobacterium nucleatum subsp. nucleatum (strain ATCC 25586 / DSM 15643 / BCRC 10681 / CIP 101130 / JCM 8532 / KCTC 2640 / LMG 13131 / VPI 4355).